A 147-amino-acid chain; its full sequence is D-aminoacyl-tRNA deacylase (147 aa).

Residues G137–P138 carry the Gly-cisPro motif, important for rejection of L-amino acids motif.

The protein belongs to the DTD family. Homodimer.

Its subcellular location is the cytoplasm. It carries out the reaction glycyl-tRNA(Ala) + H2O = tRNA(Ala) + glycine + H(+). The enzyme catalyses a D-aminoacyl-tRNA + H2O = a tRNA + a D-alpha-amino acid + H(+). An aminoacyl-tRNA editing enzyme that deacylates mischarged D-aminoacyl-tRNAs. Also deacylates mischarged glycyl-tRNA(Ala), protecting cells against glycine mischarging by AlaRS. Acts via tRNA-based rather than protein-based catalysis; rejects L-amino acids rather than detecting D-amino acids in the active site. By recycling D-aminoacyl-tRNA to D-amino acids and free tRNA molecules, this enzyme counteracts the toxicity associated with the formation of D-aminoacyl-tRNA entities in vivo and helps enforce protein L-homochirality. This Bacillus licheniformis (strain ATCC 14580 / DSM 13 / JCM 2505 / CCUG 7422 / NBRC 12200 / NCIMB 9375 / NCTC 10341 / NRRL NRS-1264 / Gibson 46) protein is D-aminoacyl-tRNA deacylase.